The chain runs to 406 residues: Elongation factor Tu (406 aa).

In terms of domain architecture, tr-type G spans 10-215 (KPHVNVGTIG…AIDEYIPTPV (206 aa)). Residues 19-26 (GHVDHGKT) are G1. Residue 19-26 (GHVDHGKT) coordinates GTP. T26 provides a ligand contact to Mg(2+). A G2 region spans residues 61–65 (GITIN). Residues 82 to 85 (DCPG) are G3. GTP-binding positions include 82 to 86 (DCPGH) and 137 to 140 (NKVD). The G4 stretch occupies residues 137-140 (NKVD). Residues 175–177 (SAL) form a G5 region.

The protein belongs to the TRAFAC class translation factor GTPase superfamily. Classic translation factor GTPase family. EF-Tu/EF-1A subfamily. As to quaternary structure, monomer.

It is found in the cytoplasm. It carries out the reaction GTP + H2O = GDP + phosphate + H(+). Its function is as follows. GTP hydrolase that promotes the GTP-dependent binding of aminoacyl-tRNA to the A-site of ribosomes during protein biosynthesis. In Thermus thermophilus (strain ATCC BAA-163 / DSM 7039 / HB27), this protein is Elongation factor Tu.